The following is a 2209-amino-acid chain: Genome polyprotein (2209 aa).

The N-myristoyl glycine; by host moiety is linked to residue G2. Topologically, residues G2 to Q1520 are cytoplasmic. An amphipathic alpha-helix region spans residues G580–A600. Active-site for protease 2A activity residues include H901 and D919. Zn(2+) contacts are provided by C936 and C938. Residue C990 is the For protease 2A activity of the active site. The Zn(2+) site is built by C996 and H998. Positions G1128–Q1200 are membrane-binding. The interval G1128–T1266 is oligomerization. Positions S1149 to S1153 are RNA-binding. Residues E1232–N1388 form the SF3 helicase domain. G1256–S1263 contributes to the ATP binding site. Zn(2+)-binding residues include C1396, C1399, C1408, and C1413. A C4-type zinc finger spans residues C1396 to C1413. The RNA-binding stretch occupies residues E1440 to I1447. Residues M1451–Q1456 are oligomerization. Residues A1521–Y1536 lie within the membrane without spanning it. At K1537–F2209 the chain is on the cytoplasmic side. The residue at position 1546 (Y1546) is an O-(5'-phospho-RNA)-tyrosine. Residues G1566–F1744 form the Peptidase C3 domain. Active-site for protease 3C activity residues include H1605, E1636, and C1712. In terms of domain architecture, RdRp catalytic spans E1975–L2090. D1981 and D2076 together coordinate Mg(2+).

The protein belongs to the picornaviruses polyprotein family. As to quaternary structure, interacts with capsid protein VP1 and capsid protein VP3 to form heterotrimeric protomers. Interacts with capsid protein VP0, and capsid protein VP3 to form heterotrimeric protomers. Interacts with human PVR. Five protomers subsequently associate to form pentamers which serve as building blocks for the capsid. Interacts with capsid protein VP2, capsid protein VP3 and capsid protein VP4 following cleavage of capsid protein VP0. In terms of assembly, interacts with capsid protein VP1 and capsid protein VP3 in the mature capsid. As to quaternary structure, interacts with capsid protein VP0 and capsid protein VP1 to form heterotrimeric protomers. Five protomers subsequently associate to form pentamers which serve as building blocks for the capsid. Interacts with capsid protein VP4 in the mature capsid. Interacts with protein 2C; this interaction may be important for virion morphogenesis. Interacts with capsid protein VP1 and capsid protein VP3. In terms of assembly, homodimer. As to quaternary structure, homohexamer; forms a hexameric ring structure with 6-fold symmetry characteristic of AAA+ ATPases. Interacts (via N-terminus) with host RTN3 (via reticulon domain); this interaction is important for viral replication. Interacts with capsid protein VP3; this interaction may be important for virion morphogenesis. Interacts with protein 3CD. In terms of assembly, homodimer. Interacts with host GBF1. Interacts (via GOLD domain) with host ACBD3 (via GOLD domain); this interaction allows the formation of a viral protein 3A/ACBD3 heterotetramer with a 2:2 stoichiometry, which will stimulate the recruitment of host PI4KB in order to synthesize PI4P at the viral RNA replication sites. As to quaternary structure, interacts with RNA-directed RNA polymerase. Interacts with protein 3AB and with RNA-directed RNA polymerase. In terms of assembly, interacts with Viral protein genome-linked and with protein 3CD. Mg(2+) serves as cofactor. Specific enzymatic cleavages in vivo by the viral proteases yield processing intermediates and the mature proteins. In terms of processing, myristoylation is required for the formation of pentamers during virus assembly. Further assembly of 12 pentamers and a molecule of genomic RNA generates the provirion. Post-translationally, during virion maturation, immature virions are rendered infectious following cleavage of VP0 into VP4 and VP2. This maturation seems to be an autocatalytic event triggered by the presence of RNA in the capsid and it is followed by a conformational change infectious virion. Myristoylation is required during RNA encapsidation and formation of the mature virus particle. In terms of processing, VPg is uridylylated by the polymerase into VPg-pUpU. This acts as a nucleotide-peptide primer for the genomic RNA replication.

The protein localises to the virion. Its subcellular location is the host cytoplasm. It localises to the host cytoplasmic vesicle membrane. The protein resides in the host nucleus. The catalysed reaction is a ribonucleoside 5'-triphosphate + H2O = a ribonucleoside 5'-diphosphate + phosphate + H(+). The enzyme catalyses Selective cleavage of Tyr-|-Gly bond in the picornavirus polyprotein.. It carries out the reaction RNA(n) + a ribonucleoside 5'-triphosphate = RNA(n+1) + diphosphate. It catalyses the reaction Selective cleavage of Gln-|-Gly bond in the poliovirus polyprotein. In other picornavirus reactions Glu may be substituted for Gln, and Ser or Thr for Gly.. Its activity is regulated as follows. Replication or transcription is subject to high level of random mutations by the nucleotide analog ribavirin. In terms of biological role, forms an icosahedral capsid of pseudo T=3 symmetry with capsid proteins VP2 and VP3. The capsid is 300 Angstroms in diameter, composed of 60 copies of each capsid protein and enclosing the viral positive strand RNA genome. Capsid protein VP1 mainly forms the vertices of the capsid. Capsid protein VP1 interacts with host cell receptor PVR to provide virion attachment to target host cells. This attachment induces virion internalization predominantly through clathrin- and caveolin-independent endocytosis in Hela cells and through caveolin-mediated endocytosis in brain microvascular endothelial cells. Tyrosine kinases are probably involved in the entry process. Virus binding to PVR induces increased junctional permeability and rearrangement of junctional proteins. Modulation of endothelial tight junctions, as well as cytolytic infection of endothelial cells themselves, may result in loss of endothelial integrity which may help the virus to reach the CNS. After binding to its receptor, the capsid undergoes conformational changes. Capsid protein VP1 N-terminus (that contains an amphipathic alpha-helix) and capsid protein VP4 are externalized. Together, they shape a pore in the host membrane through which viral genome is translocated to host cell cytoplasm. Functionally, forms an icosahedral capsid of pseudo T=3 symmetry with capsid proteins VP2 and VP3. The capsid is 300 Angstroms in diameter, composed of 60 copies of each capsid protein and enclosing the viral positive strand RNA genome. Its function is as follows. Lies on the inner surface of the capsid shell. After binding to the host receptor, the capsid undergoes conformational changes. Capsid protein VP4 is released, Capsid protein VP1 N-terminus is externalized, and together, they shape a pore in the host membrane through which the viral genome is translocated into the host cell cytoplasm. Component of immature procapsids, which is cleaved into capsid proteins VP4 and VP2 after maturation. Allows the capsid to remain inactive before the maturation step. In terms of biological role, cysteine protease that cleaves viral polyprotein and specific host proteins. It is responsible for the autocatalytic cleavage between the P1 and P2 regions, which is the first cleavage occurring in the polyprotein. Also cleaves the host translation initiation factor EIF4G1, in order to shut down the capped cellular mRNA translation. Inhibits the host nucleus-cytoplasm protein and RNA trafficking by cleaving host members of the nuclear pores including NUP98, NUP62 and NUP153. Counteracts stress granule formation probably by antagonizing its assembly or promoting its dissassembly. Cleaves and inhibits host IFIH1/MDA5, thereby inhibiting the type-I IFN production and the establishment of the antiviral state. Cleaves and inhibits host MAVS, thereby inhibiting the type-I IFN production and the establishment of the antiviral state. Functionally, plays an essential role in the virus replication cycle by acting as a viroporin. Creates a pore in the host endoplasmic reticulum and as a consequence releases Ca2+ in the cytoplasm of infected cell. In turn, high levels of cytoplasmic calcium may trigger membrane trafficking and transport of viral ER-associated proteins to viroplasms, sites of viral genome replication. Its function is as follows. Induces and associates with structural rearrangements of intracellular membranes. Displays RNA-binding, nucleotide binding and NTPase activities. May play a role in virion morphogenesis and viral RNA encapsidation by interacting with the capsid protein VP3. Localizes the viral replication complex to the surface of membranous vesicles. Together with protein 3CD binds the Cis-Active RNA Element (CRE) which is involved in RNA synthesis initiation. Acts as a cofactor to stimulate the activity of 3D polymerase, maybe through a nucleid acid chaperone activity. In terms of biological role, localizes the viral replication complex to the surface of membranous vesicles. It inhibits host cell endoplasmic reticulum-to-Golgi apparatus transport and causes the disassembly of the Golgi complex, possibly through GBF1 interaction. This would result in depletion of MHC, trail receptors and IFN receptors at the host cell surface. Plays an essential role in viral RNA replication by recruiting ACBD3 and PI4KB at the viral replication sites, thereby allowing the formation of the rearranged membranous structures where viral replication takes place. Functionally, acts as a primer for viral RNA replication and remains covalently bound to viral genomic RNA. VPg is uridylylated prior to priming replication into VPg-pUpU. The oriI viral genomic sequence may act as a template for this. The VPg-pUpU is then used as primer on the genomic RNA poly(A) by the RNA-dependent RNA polymerase to replicate the viral genome. During genome replication, the VPg-RNA linkage is removed by the host TDP2, thereby accelerating replication. During the late stage of the replication cycle, host TDP2 is excluded from sites of viral RNA synthesis and encapsidation, allowing for the generation of progeny virions. Its function is as follows. Involved in the viral replication complex and viral polypeptide maturation. It exhibits protease activity with a specificity and catalytic efficiency that is different from protease 3C. Protein 3CD lacks polymerase activity. Protein 3CD binds to the 5'UTR of the viral genome. Major viral protease that mediates proteolytic processing of the polyprotein. Cleaves host EIF5B, contributing to host translation shutoff. Also cleaves host PABPC1, contributing to host translation shutoff. Cleaves host RIGI and thus contributes to the inhibition of type I interferon production. Cleaves host NLRP1, triggers host N-glycine-mediated degradation of the autoinhibitory NLRP1 N-terminal fragment. Inhibits the integrated stress response (ISR) in the infected cell by cleaving host G3BP1. Stress granule formation is thus inhibited, which allows protein synthesis and viral replication. In terms of biological role, replicates the viral genomic RNA on the surface of intracellular membranes. May form linear arrays of subunits that propagate along a strong head-to-tail interaction called interface-I. Covalently attaches UMP to a tyrosine of VPg, which is used to prime RNA synthesis. The positive stranded RNA genome is first replicated at virus induced membranous vesicles, creating a dsRNA genomic replication form. This dsRNA is then used as template to synthesize positive stranded RNA genomes. ss(+)RNA genomes are either translated, replicated or encapsidated. This is Genome polyprotein from Homo sapiens (Human).